The primary structure comprises 288 residues: Transmembrane and coiled-coil domain-containing protein 5A (288 aa).

The stretch at 10 to 189 (KKNIISLNMD…ELETGYLERE (180 aa)) forms a coiled coil. Residues 227–249 (SLLFSTLFFIRLLGYLIFHLSFI) form a helical membrane-spanning segment.

The protein belongs to the TMCO5 family. As to expression, only detected in testis (at protein level).

Its subcellular location is the endoplasmic reticulum membrane. The protein localises to the nucleus membrane. This chain is Transmembrane and coiled-coil domain-containing protein 5A (Tmco5a), found in Mus musculus (Mouse).